The sequence spans 703 residues: Probable ATP-dependent RNA helicase vasa-like (703 aa).

Disordered stretches follow at residues 1-22 (MSDDWDETDAAPASDWNIESFG), 35-73 (NTGNAFNDGEGGFDEGSQSNFDDPFRSGGGGFGGRGRGG), and 88-167 (RDCP…RGCF). Gly residues predominate over residues 61 to 73 (SGGGGFGGRGRGG). The CCHC-type 1 zinc-finger motif lies at 77–92 (CFKCGDEGHMARDCPS). Gly residues predominate over residues 146-155 (FGFGSGSGSR). 2 CCHC-type zinc fingers span residues 166–181 (CFKCGEEGHMSRDCPS) and 189–204 (CFKCGQEGHNARDCPN). A Q motif motif is present at residues 261-289 (ESFQSMNLRPLLLENIVKAGYGCPTPVQK). A Helicase ATP-binding domain is found at 292–475 (IPNVMNGRDI…SAFLNNYLFV (184 aa)). 305–312 (AQTGSGKT) is an ATP binding site. A DEAD box motif is present at residues 419 to 422 (DEAD). The 146-residue stretch at 506–651 (MCEEILISAD…TIPDWLTQKA (146 aa)) folds into the Helicase C-terminal domain. The tract at residues 676 to 703 (GGGRGWEKNQASSFLGGPSESNVDEEWD) is disordered.

This sequence belongs to the DEAD box helicase family. DDX4/VASA subfamily. As to expression, expressed in ovaries and testis. Not expressed in somatic tissue of the ovaries including follicle cells, muscle and connective tissue.

Its subcellular location is the cytoplasm. The protein resides in the nucleus. It localises to the nucleolus. The enzyme catalyses ATP + H2O = ADP + phosphate + H(+). Its function is as follows. Involved in translational control mechanisms operating in early stages of oogenesis. Required maternally in many stages of oogenesis, including cystocyte differentiation, oocyte differentiation, and specification of anterior-posterior polarity in the developing cysts. Essential for the formation and/or structural integrity of perinuclear nuage particles during germ cell formation. The chain is Probable ATP-dependent RNA helicase vasa-like from Penaeus vannamei (Whiteleg shrimp).